Reading from the N-terminus, the 374-residue chain is Chaperone protein DnaJ (374 aa).

The 66-residue stretch at 4 to 69 (DFYETLCVSR…QKRAAYDRFG (66 aa)) folds into the J domain. A CR-type zinc finger spans residues 131 to 210 (GKTAQIRVPT…CSGQGRLTEE (80 aa)). Zn(2+)-binding residues include Cys144, Cys147, Cys161, Cys164, Cys184, Cys187, Cys198, and Cys201. CXXCXGXG motif repeat units lie at residues 144-151 (CDECAGSG), 161-168 (CPMCHGAG), 184-191 (CPQCQGRG), and 198-205 (CRKCSGQG).

The protein belongs to the DnaJ family. Homodimer. Requires Zn(2+) as cofactor.

It localises to the cytoplasm. Participates actively in the response to hyperosmotic and heat shock by preventing the aggregation of stress-denatured proteins and by disaggregating proteins, also in an autonomous, DnaK-independent fashion. Unfolded proteins bind initially to DnaJ; upon interaction with the DnaJ-bound protein, DnaK hydrolyzes its bound ATP, resulting in the formation of a stable complex. GrpE releases ADP from DnaK; ATP binding to DnaK triggers the release of the substrate protein, thus completing the reaction cycle. Several rounds of ATP-dependent interactions between DnaJ, DnaK and GrpE are required for fully efficient folding. Also involved, together with DnaK and GrpE, in the DNA replication of plasmids through activation of initiation proteins. In Chelativorans sp. (strain BNC1), this protein is Chaperone protein DnaJ.